The chain runs to 156 residues: Transcription inhibitor protein Gfh1 (156 aa).

Residues 1-74 are a coiled coil; it reads MAREVKLTKA…LEDILSRAVI (74 aa).

Belongs to the GreA/GreB family. Interacts with RNAP.

Inhibits all catalytic activities of RNA polymerase (RNAP) by partially occluding its substrate-binding site and preventing NTP binding. The protein is Transcription inhibitor protein Gfh1 (gfh1) of Thermus thermophilus (strain ATCC BAA-163 / DSM 7039 / HB27).